We begin with the raw amino-acid sequence, 356 residues long: MSRANPPSNSSGSRKISFNVSEQYDIQDVVGEGAYGVVCSAIHKPSGQKVAIKKITPFDHSMFCLRTLREMKLLRYFNHENIISILDIQKPRSYETFNEVYLIQELMETDMHRVIRTQDLSDDHCQYFIYQTLRALKAMHSANVLHRDLKPSNLLLNANCDLKVCDFGLARSAASQENNSGFMTEYVATRWYRAPEIMLTFKEYTKAIDVWSVGCILAEMLSGKPLFPGKDYHHQLTLILDVLGTPTMEDYYGIKSRRAREYIRSLPFKKKVPFRTLFPKTSDLALDLLEKLLAFNPVKRITVEEALKHPYLEPYHDPDDEPTAPPIPEEFFDFDKHKDNLSKEQLKQFIYQEIMR.

The 289-residue stretch at 24–312 (YDIQDVVGEG…VEEALKHPYL (289 aa)) folds into the Protein kinase domain. ATP is bound by residues 30-38 (VGEGAYGVV) and Lys53.

This sequence belongs to the protein kinase superfamily. CMGC Ser/Thr protein kinase family. MAP kinase subfamily. Mg(2+) serves as cofactor. Phosphorylated by MST7.

The catalysed reaction is L-seryl-[protein] + ATP = O-phospho-L-seryl-[protein] + ADP + H(+). The enzyme catalyses L-threonyl-[protein] + ATP = O-phospho-L-threonyl-[protein] + ADP + H(+). Mitogen-activated protein kinase; part of the MST11-MST7-PMK1 MAP kinase (MAPK) cascade that is essential for appressorium formation, penetration and invasive growth. Central regulator of appressorium development that acts downstream of the cAMP signal. The MST11-MST7-PMK1 MAP kinase cascade transduces signals from the cell surface sensors MDB2 and SHO1 that recognize various surface signals such as surface hydrophobicity, cutin monomers, and rice leaf waxes. Regulates expression of secreted fungal effector proteins implicated of host immune defenses, preventing reactive oxygen species generation and excessive callose deposition at plasmodesmata. Furthermore, controls the hyphal constriction required for fungal growth from one rice cell to the neighboring cell, enabling host tissue colonization and blast disease. Targets downstream of the PMK1-MAPK pathway include transcription factor MST12 and pathogenicity-related genes GAS1 and GAS2, both of which are expressed during appressorium formation, even if regulation of MST12 is not associated with expression of GAS1 or GAS2. This chain is Mitogen-activated protein kinase PMK1, found in Pyricularia oryzae (Rice blast fungus).